The primary structure comprises 173 residues: Crossover junction endodeoxyribonuclease RuvC (173 aa).

Active-site residues include Asp-8, Glu-69, and Asp-141. Positions 8, 69, and 141 each coordinate Mg(2+).

It belongs to the RuvC family. In terms of assembly, homodimer which binds Holliday junction (HJ) DNA. The HJ becomes 2-fold symmetrical on binding to RuvC with unstacked arms; it has a different conformation from HJ DNA in complex with RuvA. In the full resolvosome a probable DNA-RuvA(4)-RuvB(12)-RuvC(2) complex forms which resolves the HJ. It depends on Mg(2+) as a cofactor.

It localises to the cytoplasm. It carries out the reaction Endonucleolytic cleavage at a junction such as a reciprocal single-stranded crossover between two homologous DNA duplexes (Holliday junction).. Its function is as follows. The RuvA-RuvB-RuvC complex processes Holliday junction (HJ) DNA during genetic recombination and DNA repair. Endonuclease that resolves HJ intermediates. Cleaves cruciform DNA by making single-stranded nicks across the HJ at symmetrical positions within the homologous arms, yielding a 5'-phosphate and a 3'-hydroxyl group; requires a central core of homology in the junction. The consensus cleavage sequence is 5'-(A/T)TT(C/G)-3'. Cleavage occurs on the 3'-side of the TT dinucleotide at the point of strand exchange. HJ branch migration catalyzed by RuvA-RuvB allows RuvC to scan DNA until it finds its consensus sequence, where it cleaves and resolves the cruciform DNA. This chain is Crossover junction endodeoxyribonuclease RuvC, found in Stenotrophomonas maltophilia (strain R551-3).